The sequence spans 425 residues: 3-isopropylmalate dehydratase large subunit (425 aa).

[4Fe-4S] cluster is bound by residues cysteine 305, cysteine 365, and cysteine 368.

Belongs to the aconitase/IPM isomerase family. LeuC type 2 subfamily. Heterodimer of LeuC and LeuD. [4Fe-4S] cluster is required as a cofactor.

The enzyme catalyses (2R,3S)-3-isopropylmalate = (2S)-2-isopropylmalate. It functions in the pathway amino-acid biosynthesis; L-leucine biosynthesis; L-leucine from 3-methyl-2-oxobutanoate: step 2/4. Functionally, catalyzes the isomerization between 2-isopropylmalate and 3-isopropylmalate, via the formation of 2-isopropylmaleate. This chain is 3-isopropylmalate dehydratase large subunit, found in Clostridioides difficile (strain 630) (Peptoclostridium difficile).